The chain runs to 285 residues: Probable endonuclease 4 (285 aa).

Zn(2+) is bound by residues H69, H109, E145, D179, H182, H216, D229, H231, and E261.

Belongs to the AP endonuclease 2 family. It depends on Zn(2+) as a cofactor.

The enzyme catalyses Endonucleolytic cleavage to 5'-phosphooligonucleotide end-products.. Endonuclease IV plays a role in DNA repair. It cleaves phosphodiester bonds at apurinic or apyrimidinic (AP) sites, generating a 3'-hydroxyl group and a 5'-terminal sugar phosphate. The sequence is that of Probable endonuclease 4 from Citrobacter koseri (strain ATCC BAA-895 / CDC 4225-83 / SGSC4696).